The primary structure comprises 93 residues: MSNGTPSVRVLYFASARTTIGHSSETISLPTTPFPLASLITLIANKYSSRGAEAVLRTCRWSVDNTLIEIDELIEWTLHGREEVAAIPPVSGG.

1-thioglycine; alternate is present on glycine 93. Residue glycine 93 is modified to Glycyl adenylate; alternate.

Belongs to the MoaD family. MOCS2A subfamily. Heterotetramer; composed of 2 small (MOCS2A) and 2 large (MOCS2B) subunits. Post-translationally, C-terminal thiocarboxylation occurs in 2 steps, it is first acyl-adenylated (-COAMP) via the hesA/moeB/thiF part of UBA4, then thiocarboxylated (-COSH) via the rhodanese domain of UBA4.

It is found in the cytoplasm. It functions in the pathway cofactor biosynthesis; molybdopterin biosynthesis. Acts as a sulfur carrier required for molybdopterin biosynthesis. Component of the molybdopterin synthase complex that catalyzes the conversion of precursor Z into molybdopterin by mediating the incorporation of 2 sulfur atoms into precursor Z to generate a dithiolene group. In the complex, serves as sulfur donor by being thiocarboxylated (-COSH) at its C-terminus by UBA4. After interaction with MOCS2B, the sulfur is then transferred to precursor Z to form molybdopterin. The polypeptide is Molybdopterin synthase sulfur carrier subunit (Mycosarcoma maydis (Corn smut fungus)).